The primary structure comprises 414 residues: Mu-like prophage FluMu F protein (414 aa).

To phage Mu protein F.

Its function is as follows. Involved in virion morphogenesis. The polypeptide is Mu-like prophage FluMu F protein (Haemophilus influenzae (strain ATCC 51907 / DSM 11121 / KW20 / Rd)).